The following is a 189-amino-acid chain: Chitin synthase 1 (189 aa).

The protein belongs to the chitin synthase family. Class I subfamily.

Its subcellular location is the cell membrane. The catalysed reaction is [(1-&gt;4)-N-acetyl-beta-D-glucosaminyl](n) + UDP-N-acetyl-alpha-D-glucosamine = [(1-&gt;4)-N-acetyl-beta-D-glucosaminyl](n+1) + UDP + H(+). Polymerizes chitin, a structural polymer of the cell wall and septum, by transferring the sugar moiety of UDP-GlcNAc to the non-reducing end of the growing chitin polymer. The chain is Chitin synthase 1 (CHS1) from Exophiala jeanselmei (Dematiaceous fungus).